Here is a 370-residue protein sequence, read N- to C-terminus: Histidinol-phosphate aminotransferase 1 (370 aa).

Position 222 is an N6-(pyridoxal phosphate)lysine (lysine 222).

The protein belongs to the class-II pyridoxal-phosphate-dependent aminotransferase family. Histidinol-phosphate aminotransferase subfamily. In terms of assembly, homodimer. Requires pyridoxal 5'-phosphate as cofactor.

It carries out the reaction L-histidinol phosphate + 2-oxoglutarate = 3-(imidazol-4-yl)-2-oxopropyl phosphate + L-glutamate. The protein operates within amino-acid biosynthesis; L-histidine biosynthesis; L-histidine from 5-phospho-alpha-D-ribose 1-diphosphate: step 7/9. This chain is Histidinol-phosphate aminotransferase 1 (hisC1), found in Bacillus anthracis.